Consider the following 475-residue polypeptide: uncharacterized protein (475 aa).

The chain crosses the membrane as a helical span at residues 7 to 28 (HVISIFETLGAYFINIFYNFLY). N-linked (GlcNAc...) asparagine; by host glycans are attached at residues Asn73, Asn83, and Asn195. The stretch at 183-233 (ELEETYARLSSYNRSLLHQIEELTSEKKSLLADLSTLRKKYEKRQSEYRRL) forms a coiled coil. Residues 295 to 305 (SQELTSKSPNN) are compositionally biased toward polar residues. Positions 295–324 (SQELTSKSPNNYPVPHSRTIVSKPPDNYPV) are disordered. Residues Asn450 and Asn460 are each glycosylated (N-linked (GlcNAc...) asparagine; by host).

It belongs to the asfivirus B475L family.

It is found in the host membrane. This is an uncharacterized protein from Ornithodoros (relapsing fever ticks).